The sequence spans 328 residues: Alanine racemase (328 aa).

Catalysis depends on lysine 33, which acts as the Proton acceptor; specific for D-alanine. Position 33 is an N6-(pyridoxal phosphate)lysine (lysine 33). Arginine 118 is a binding site for substrate. Tyrosine 237 acts as the Proton acceptor; specific for L-alanine in catalysis. Residue methionine 283 participates in substrate binding.

Belongs to the alanine racemase family. Pyridoxal 5'-phosphate is required as a cofactor.

The enzyme catalyses L-alanine = D-alanine. Its pathway is amino-acid biosynthesis; D-alanine biosynthesis; D-alanine from L-alanine: step 1/1. Its function is as follows. Catalyzes the interconversion of L-alanine and D-alanine. May also act on other amino acids. This Campylobacter jejuni subsp. doylei (strain ATCC BAA-1458 / RM4099 / 269.97) protein is Alanine racemase (alr).